We begin with the raw amino-acid sequence, 390 residues long: 4-hydroxycoumarin synthase 1 (390 aa).

Residue Cys161 is part of the active site.

This sequence belongs to the thiolase-like superfamily. Chalcone/stilbene synthases family. As to quaternary structure, homodimer.

The catalysed reaction is 2-hydroxybenzoyl-CoA + malonyl-CoA = 4-hydroxycoumarin + CO2 + 2 CoA. Type III polyketide synthase involved preferentially in the biosynthesis of 4-hydroxycoumarin from salicoyl-CoA. Can also use benzoyl-CoA and malonyl-CoA to produce 3,5-dihydroxybiphenyl as a major product and benzoyldiacetic acid lactone as a minor side product. Can also use m-hydroxybenzoyl-CoA as substrate, producing m-hydroxybenzoyl diacetic acid lactone as a derailment product. No activity with p-hydroxybenzoyl-CoA, CoA-linked cinnamic acids or acetyl-CoA. The sequence is that of 4-hydroxycoumarin synthase 1 (BIS2) from Sorbus aucuparia (European mountain ash).